Here is a 315-residue protein sequence, read N- to C-terminus: Apolipoprotein F (315 aa).

Positions 1 to 24 (MHSLRLILMSIQLLCYLLLCPVDA) are cleaved as a signal peptide. Residues 25 to 154 (TSHGEATSVS…EQPGPKRAKR (130 aa)) constitute a propeptide that is removed on maturation.

The protein belongs to the apolipoprotein F family. In terms of tissue distribution, liver.

The protein localises to the secreted. Functionally, minor apolipoprotein that associates with LDL. Inhibits cholesteryl ester transfer protein (CETP) activity and appears to be an important regulator of cholesterol transport. Also associates to a lesser degree with VLDL, Apo-AI and Apo-AII. The chain is Apolipoprotein F (Apof) from Mus musculus (Mouse).